A 241-amino-acid chain; its full sequence is Small ribosomal subunit protein uS2 (241 aa).

It belongs to the universal ribosomal protein uS2 family.

The chain is Small ribosomal subunit protein uS2 from Klebsiella pneumoniae (strain 342).